We begin with the raw amino-acid sequence, 2083 residues long: Non-reducing polyketide synthase curS2 (2083 aa).

An N-terminal acylcarrier protein transacylase domain (SAT) region spans residues 9 to 246 (LLFGDVTDPW…NELDIHALQH (238 aa)). Residues 366–798 (RDGIAIVGMA…GGNACLLLED (433 aa)) form the Ketosynthase family 3 (KS3) domain. Active-site for beta-ketoacyl synthase activity residues include cysteine 543, histidine 678, and histidine 717. A malonyl-CoA:ACP transacylase (MAT) domain region spans residues 895 to 1201 (VFVFTGQGSH…THTLQPNTHN (307 aa)). The For acyl/malonyl transferase activity role is filled by serine 986. Residues 1276–1415 (AQYLVSKSSS…DPAKTQADWD (140 aa)) are N-terminal hotdog fold. A PKS/mFAS DH domain is found at 1276–1585 (AQYLVSKSSS…YQELPRVTWK (310 aa)). The segment at 1285-1581 (SPKVQVVFRA…IDLRYQELPR (297 aa)) is product template (PT) domain. The tract at residues 1437-1585 (GHRMQPEVFY…YQELPRVTWK (149 aa)) is C-terminal hotdog fold. A Carrier domain is found at 1637–1714 (DFDEGLVDAI…DLRRAFGANK (78 aa)). At serine 1674 the chain carries O-(pantetheine 4'-phosphoryl)serine. A disordered region spans residues 1710-1790 (FGANKPKTSK…KMDETDTSPA (81 aa)). The segment covering 1718-1736 (SKPQPGSTTPSSSQSSIPS) has biased composition (low complexity). Polar residues predominate over residues 1745–1754 (MSDTASSLGS). Residues 1771–1784 (LEPKPNHHLGKMDE) show a composition bias toward basic and acidic residues. Residues 1811–2058 (MMADGTGTIA…LSVAGDHLDL (248 aa)) form a thioesterase (TE) domain region. The active-site For thioesterase activity is histidine 2065.

It participates in mycotoxin biosynthesis. Non-reducing polyketide synthase; part of the gene cluster that mediates the biosynthesis of 10,11-dehydrocurvularin, a prevalent fungal phytotoxin with heat shock response and immune-modulatory activities. The highly reducing polyketide synthase curS1 is responsible for biosynthesis up to the tetraketide stage. The non-reducing polyketide synthase curS2 then conducts four additional chain extension cycles, producing the unreduced part of the nascent octaketide from C-1 to C-8 in 10,11-dehydrocurvularin. The sequence is that of Non-reducing polyketide synthase curS2 from Aspergillus terreus.